Here is a 340-residue protein sequence, read N- to C-terminus: Cobalt-precorrin-5B C(1)-methyltransferase (340 aa).

Belongs to the CbiD family.

The catalysed reaction is Co-precorrin-5B + S-adenosyl-L-methionine = Co-precorrin-6A + S-adenosyl-L-homocysteine. It functions in the pathway cofactor biosynthesis; adenosylcobalamin biosynthesis; cob(II)yrinate a,c-diamide from sirohydrochlorin (anaerobic route): step 6/10. Functionally, catalyzes the methylation of C-1 in cobalt-precorrin-5B to form cobalt-precorrin-6A. The protein is Cobalt-precorrin-5B C(1)-methyltransferase of Methanococcoides burtonii (strain DSM 6242 / NBRC 107633 / OCM 468 / ACE-M).